Consider the following 99-residue polypeptide: Large ribosomal subunit protein bL21 (99 aa).

This sequence belongs to the bacterial ribosomal protein bL21 family. In terms of assembly, part of the 50S ribosomal subunit. Contacts protein L20.

Functionally, this protein binds to 23S rRNA in the presence of protein L20. This is Large ribosomal subunit protein bL21 from Mesomycoplasma hyopneumoniae (strain 232) (Mycoplasma hyopneumoniae).